A 215-amino-acid polypeptide reads, in one-letter code: Adenylate kinase (215 aa).

An ATP-binding site is contributed by Gly10 to Thr15. Positions Ser30–Val59 are NMP. AMP-binding positions include Thr31, Arg36, Leu57 to Val59, Gly85 to Arg88, and Gln92. An LID region spans residues Gly126–Asp163. Arg127 serves as a coordination point for ATP. 2 residues coordinate Zn(2+): Cys130 and Cys133. Residue Ser136 to Phe137 coordinates ATP. Zn(2+) contacts are provided by Cys150 and Cys153. 2 residues coordinate AMP: Arg160 and Arg171. ATP is bound at residue Gln198.

It belongs to the adenylate kinase family. In terms of assembly, monomer.

The protein localises to the cytoplasm. The catalysed reaction is AMP + ATP = 2 ADP. Its pathway is purine metabolism; AMP biosynthesis via salvage pathway; AMP from ADP: step 1/1. Its function is as follows. Catalyzes the reversible transfer of the terminal phosphate group between ATP and AMP. Plays an important role in cellular energy homeostasis and in adenine nucleotide metabolism. The chain is Adenylate kinase from Caldicellulosiruptor bescii (strain ATCC BAA-1888 / DSM 6725 / KCTC 15123 / Z-1320) (Anaerocellum thermophilum).